A 192-amino-acid chain; its full sequence is Xanthine phosphoribosyltransferase (192 aa).

Leu20 and Asn27 together coordinate xanthine. Ala128–Ala132 contacts 5-phospho-alpha-D-ribose 1-diphosphate. Residue Lys156 participates in xanthine binding.

It belongs to the purine/pyrimidine phosphoribosyltransferase family. Xpt subfamily. Homodimer.

Its subcellular location is the cytoplasm. The catalysed reaction is XMP + diphosphate = xanthine + 5-phospho-alpha-D-ribose 1-diphosphate. It participates in purine metabolism; XMP biosynthesis via salvage pathway; XMP from xanthine: step 1/1. Converts the preformed base xanthine, a product of nucleic acid breakdown, to xanthosine 5'-monophosphate (XMP), so it can be reused for RNA or DNA synthesis. The protein is Xanthine phosphoribosyltransferase of Lactobacillus gasseri (strain ATCC 33323 / DSM 20243 / BCRC 14619 / CIP 102991 / JCM 1131 / KCTC 3163 / NCIMB 11718 / NCTC 13722 / AM63).